A 309-amino-acid polypeptide reads, in one-letter code: DDRGK domain-containing protein 1 (309 aa).

Residues 1–2 (MD) lie on the Lumenal side of the membrane. The helical transmembrane segment at 3 to 23 (LIILVGIASALLVVILTIFFL) threads the bilayer. Residues 24 to 309 (QKKKGGTEAK…VSAGAGEGSS (286 aa)) lie on the Cytoplasmic side of the membrane. A disordered region spans residues 30 to 178 (TEAKEAAAPP…RLVKEERERK (149 aa)). The span at 53–84 (RRAQIARNQRNRLRQNAPAAAPAAAAALQAAD) shows a compositional bias: low complexity. The segment covering 85-95 (AEGDNDDENPD) has biased composition (acidic residues). The span at 107-178 (LDEKMGAKKR…RLVKEERERK (72 aa)) shows a compositional bias: basic and acidic residues.

The protein belongs to the DDRGK1 family. In terms of assembly, interacts with Atg9; the interaction is transient.

The protein resides in the endoplasmic reticulum membrane. Its function is as follows. Substrate adapter for ufmylation, the covalent attachment of the ubiquitin-like modifier UFM1 to substrate proteins. Required for ufmylation of Atg9; protects the nervous system during aging, possibly by stabilizing Atg9 and supporting its function. This is DDRGK domain-containing protein 1 from Drosophila persimilis (Fruit fly).